A 125-amino-acid polypeptide reads, in one-letter code: Large ribosomal subunit protein uL22 (125 aa).

Belongs to the universal ribosomal protein uL22 family. Part of the 50S ribosomal subunit.

This protein binds specifically to 23S rRNA; its binding is stimulated by other ribosomal proteins, e.g. L4, L17, and L20. It is important during the early stages of 50S assembly. It makes multiple contacts with different domains of the 23S rRNA in the assembled 50S subunit and ribosome. Functionally, the globular domain of the protein is located near the polypeptide exit tunnel on the outside of the subunit, while an extended beta-hairpin is found that lines the wall of the exit tunnel in the center of the 70S ribosome. The polypeptide is Large ribosomal subunit protein uL22 (Acetivibrio thermocellus (strain ATCC 27405 / DSM 1237 / JCM 9322 / NBRC 103400 / NCIMB 10682 / NRRL B-4536 / VPI 7372) (Clostridium thermocellum)).